The chain runs to 263 residues: L-histidine 2-aminobutanoyltransferase (263 aa).

This sequence belongs to the methyltransferase superfamily. CntL family. In terms of assembly, interacts with CntM.

The enzyme catalyses L-histidine + S-adenosyl-L-methionine = (2S)-2-amino-4-{[(1S)-1-carboxy-2-(1H-imidazol-4-yl)ethyl]amino}butanoate + S-methyl-5'-thioadenosine + H(+). Catalyzes the nucleophilic attack of one alpha-aminobutanoate moiety from SAM onto L-histidine to produce the intermediate (2S)-2-amino-4-{[(1S)-1-carboxy-2-(1H-imidazol-4-yl)ethyl]amino}butanoate. Functions in the biosynthesis of the metallophore pseudopaline, which is involved in the acquisition of nickel and zinc, and thus enables bacterial growth inside the host, where metal access is limited. Therefore, this enzyme probably contributes to Pseudomonas virulence. Cannot use D-histidine in place of L-histidine as substrate. This Pseudomonas aeruginosa (strain UCBPP-PA14) protein is L-histidine 2-aminobutanoyltransferase.